The sequence spans 377 residues: MFDPHILDSPAVIFDNGSGLCKAGLSGEIGPRHVVSSVVGHPKFKTPLTGANQKKYFVGEEALHRHEVLQLHYPIERGLITGWEDMEKLWKHLFEWELGVKANDQPVLMTEPSLNPRETREKMAEVMFESFNVPAFYLSDQAVLALYASACVTGLVVDSGDGVTCTVPIFEGYSLPHAVTKLYVAGRDITEHLTRLLLASGRTFSCVLDKALVDDIKEKLCYVALEPDKELCRRPEEVLREYKLPDGNIVPIGDQLYQAPEALFSPEKLGIQNPGLSKMVSCSITKCDADIQKTLYGEIVLSGGTTLFQGLDDRLLRELEQLASKGTPIKITAPPDRWFSTWIGASIVTSLSSFKQMWVTSADFKEFGTSVIQRRCF.

This sequence belongs to the actin family.

It is found in the cytoplasm. Its subcellular location is the cytoskeleton. The sequence is that of Actin-related protein T2 (ACTRT2) from Bos taurus (Bovine).